The sequence spans 161 residues: uncharacterized protein (161 aa).

Residues 1-23 constitute a signal peptide (or 21); sequence MKKFAFLTALFAACYLPNAYAHA. A helical transmembrane segment spans residues 129 to 149; the sequence is IYLHDILGGIGYIVGIAGLIA.

The protein localises to the membrane. This is an uncharacterized protein from Haemophilus influenzae (strain ATCC 51907 / DSM 11121 / KW20 / Rd).